The following is a 346-amino-acid chain: Peripherin-2 (346 aa).

Residues 1-24 (MALLKVKFDQKKRVKLAQGLWLMN) lie on the Cytoplasmic side of the membrane. The chain crosses the membrane as a helical span at residues 25–43 (WLSVLAGIVIFSLGLFLKI). The Lumenal portion of the chain corresponds to 44 to 61 (ELRKRSDVMNNSESHFVP). An N-linked (GlcNAc...) asparagine glycan is attached at Asn-53. The chain crosses the membrane as a helical span at residues 62 to 80 (NSLIGMGVLSCVFNSLAGK). The Cytoplasmic portion of the chain corresponds to 81-99 (ICYDALDPSKYAKWKPWLK). A helical membrane pass occupies residues 100 to 123 (SYLVVCVLFNIVLFLVALCCFLMR). Over 124–264 (GSLESTLAQG…LSYYGSLMNS (141 aa)) the chain is Lumenal. Asn-229 carries an N-linked (GlcNAc...) asparagine glycan. Residues 265 to 290 (MGAVTLLVWLFEVSITIGLRYLHTAL) form a helical membrane-spanning segment. Topologically, residues 291–346 (EGVSNPEDLECESEGWLLEKSVSETWKAFLESLKKLGKSNQVEAEGADAGQAPEAG) are cytoplasmic. The interaction with MREG stretch occupies residues 341–346 (QAPEAG).

This sequence belongs to the PRPH2/ROM1 family. Homodimer; disulfide-linked. Forms a homotetramer. Forms a heterotetramer with ROM1. Homotetramer and heterotetramer core complexes go on to form higher order complexes by formation of intermolecular disulfide bonds. Interacts with MREG. Interacts with STX3. Interacts with SNAP25. As to expression, retina (photoreceptor). In rim region of ROS (rod outer segment) disks.

It is found in the membrane. The protein localises to the cell projection. The protein resides in the cilium. Its subcellular location is the photoreceptor outer segment. It localises to the photoreceptor inner segment. Its function is as follows. Essential for retina photoreceptor outer segment disk morphogenesis, may also play a role with ROM1 in the maintenance of outer segment disk structure. Required for the maintenance of retinal outer nuclear layer thickness. Required for the correct development and organization of the photoreceptor inner segment. In Felis catus (Cat), this protein is Peripherin-2 (PRPH2).